The sequence spans 424 residues: Alkaline nuclease (424 aa).

This sequence belongs to the baculo-herpesviridae alkaline nuclease family. As to quaternary structure, interacts with LEF-3.

It localises to the host nucleus. Its function is as follows. May play a role in maturation and encapsidation of viral replicated genome, by promoting DNA homologous recombination. Exhibits endonuclease and 5'-&gt;3' exonuclease activities. The endonuclease activity displays a specificity for ssDNA in vitro. The protein is Alkaline nuclease (ALK-EXO) of Orgyia pseudotsugata (Douglas-fir tussock moth).